The following is a 146-amino-acid chain: Hemoglobin subunit beta (146 aa).

Val-1 carries the post-translational modification N-acetylvaline. The 145-residue stretch at 2-146 (HLTPEEKNAV…VANALAHKYH (145 aa)) folds into the Globin domain. At Thr-12 the chain carries Phosphothreonine. Residue Ser-44 is modified to Phosphoserine. Lys-59 bears the N6-acetyllysine mark. Residue His-63 coordinates heme b. Lys-82 is modified (N6-acetyllysine). His-92 lines the heme b pocket. Cys-93 is subject to S-nitrosocysteine. Position 144 is an N6-acetyllysine (Lys-144).

Belongs to the globin family. In terms of assembly, heterotetramer of two alpha chains and two beta chains. In terms of tissue distribution, red blood cells.

Involved in oxygen transport from the lung to the various peripheral tissues. The protein is Hemoglobin subunit beta (HBB) of Macaca mulatta (Rhesus macaque).